A 351-amino-acid chain; its full sequence is uncharacterized protein (351 aa).

The Mn(2+) site is built by Asp-215, Asp-226, His-290, Glu-319, and Glu-333.

This sequence belongs to the peptidase M24B family. The cofactor is Mn(2+).

This is an uncharacterized protein from Staphylococcus aureus (strain MSSA476).